The sequence spans 644 residues: DNA mismatch repair protein MutL (644 aa).

2 disordered regions span residues 338 to 390 (RPNA…ERPA) and 416 to 445 (QPQE…DDTQ). Composition is skewed to low complexity over residues 349 to 366 (EATP…EASA) and 416 to 427 (QPQEAAEEAAGT).

The protein belongs to the DNA mismatch repair MutL/HexB family.

Functionally, this protein is involved in the repair of mismatches in DNA. It is required for dam-dependent methyl-directed DNA mismatch repair. May act as a 'molecular matchmaker', a protein that promotes the formation of a stable complex between two or more DNA-binding proteins in an ATP-dependent manner without itself being part of a final effector complex. In Chromohalobacter salexigens (strain ATCC BAA-138 / DSM 3043 / CIP 106854 / NCIMB 13768 / 1H11), this protein is DNA mismatch repair protein MutL.